The following is a 379-amino-acid chain: Heme A synthase (379 aa).

The segment at 1–28 (MAGSRSIFEEVQDSQKPAAMPGGVSRDR) is disordered. Transmembrane regions (helical) follow at residues 35-55 (VRVFIMILFVMVVVQIAIGGL), 124-144 (FLGVVWAVGFVGLLATKSVPV), 150-170 (LLLLGVLGGLQGVAGWWMVHS), 183-203 (RLAVHLGLAFLILGLMAWYIL), 227-247 (ATGLLHLTALQILIGALVAGI), 287-307 (FFHRVTGYLLFVIGVAAWIMA), 318-338 (AFDWMAVMLFGQIVLGIMTVM), and 341-361 (SPWYLAIVHQFGAVVLITLIL). His289 contacts heme. Residue His349 participates in heme binding.

This sequence belongs to the COX15/CtaA family. Type 2 subfamily. Interacts with CtaB. Heme b is required as a cofactor.

It localises to the cell membrane. The catalysed reaction is Fe(II)-heme o + 2 A + H2O = Fe(II)-heme a + 2 AH2. Its pathway is porphyrin-containing compound metabolism; heme A biosynthesis; heme A from heme O: step 1/1. Its function is as follows. Catalyzes the conversion of heme O to heme A by two successive hydroxylations of the methyl group at C8. The first hydroxylation forms heme I, the second hydroxylation results in an unstable dihydroxymethyl group, which spontaneously dehydrates, resulting in the formyl group of heme A. In Jannaschia sp. (strain CCS1), this protein is Heme A synthase.